Consider the following 472-residue polypeptide: Methylenetetrahydrofolate--tRNA-(uracil-5-)-methyltransferase TrmFO (472 aa).

FAD is bound at residue 10 to 15 (GGGLAG).

This sequence belongs to the MnmG family. TrmFO subfamily. FAD is required as a cofactor.

It is found in the cytoplasm. The catalysed reaction is uridine(54) in tRNA + (6R)-5,10-methylene-5,6,7,8-tetrahydrofolate + NADH + H(+) = 5-methyluridine(54) in tRNA + (6S)-5,6,7,8-tetrahydrofolate + NAD(+). It catalyses the reaction uridine(54) in tRNA + (6R)-5,10-methylene-5,6,7,8-tetrahydrofolate + NADPH + H(+) = 5-methyluridine(54) in tRNA + (6S)-5,6,7,8-tetrahydrofolate + NADP(+). In terms of biological role, catalyzes the folate-dependent formation of 5-methyl-uridine at position 54 (M-5-U54) in all tRNAs. In Mesorhizobium japonicum (strain LMG 29417 / CECT 9101 / MAFF 303099) (Mesorhizobium loti (strain MAFF 303099)), this protein is Methylenetetrahydrofolate--tRNA-(uracil-5-)-methyltransferase TrmFO.